A 104-amino-acid polypeptide reads, in one-letter code: Viral histone-like protein (104 aa).

This sequence belongs to the bacterial histone-like protein family. As to quaternary structure, homodimer.

Its subcellular location is the virion. Stilbene derivatives SD1 and SD4 disrupt the binding between pA104R and DNA and inhibit the viral replication in primary alveolar macrophages. Functionally, DNA-binding protein that plays a critical role in nucleoid compaction, genome replication and DNA replication and transcription. Binds to both ssDNA and dsDNA with a binding site covering about 15 nucleotides. Displays DNA-supercoiling activity only when associated with the viral DNA topoisomerase 2. The sequence is that of Viral histone-like protein from African swine fever virus (strain Badajoz 1971 Vero-adapted) (Ba71V).